Reading from the N-terminus, the 636-residue chain is Fructose-1,6-bisphosphatase class 3 (636 aa).

It belongs to the FBPase class 3 family. Mn(2+) serves as cofactor.

It catalyses the reaction beta-D-fructose 1,6-bisphosphate + H2O = beta-D-fructose 6-phosphate + phosphate. The protein operates within carbohydrate biosynthesis; gluconeogenesis. The sequence is that of Fructose-1,6-bisphosphatase class 3 from Streptococcus gordonii (strain Challis / ATCC 35105 / BCRC 15272 / CH1 / DL1 / V288).